The sequence spans 534 residues: CTP synthase (534 aa).

Residues 1-266 (MKTKFLFITG…DERIIDYLNI (266 aa)) are amidoligase domain. S14 lines the CTP pocket. S14 serves as a coordination point for UTP. ATP-binding positions include 15 to 20 (SLGKGL) and D72. Residues D72 and E140 each coordinate Mg(2+). CTP contacts are provided by residues 147 to 149 (DIE), 187 to 192 (KTKPTQ), and K223. Residues 187 to 192 (KTKPTQ) and K223 contribute to the UTP site. 239–241 (RDV) provides a ligand contact to ATP. Residues 291-533 (TIAIVGKYVE…VGASLKHHGE (243 aa)) form the Glutamine amidotransferase type-1 domain. Residue G353 coordinates L-glutamine. C380 functions as the Nucleophile; for glutamine hydrolysis in the catalytic mechanism. L-glutamine contacts are provided by residues 381–384 (LGMQ), E404, and R461. Catalysis depends on residues H506 and E508.

This sequence belongs to the CTP synthase family. As to quaternary structure, homotetramer.

It catalyses the reaction UTP + L-glutamine + ATP + H2O = CTP + L-glutamate + ADP + phosphate + 2 H(+). The enzyme catalyses L-glutamine + H2O = L-glutamate + NH4(+). The catalysed reaction is UTP + NH4(+) + ATP = CTP + ADP + phosphate + 2 H(+). Its pathway is pyrimidine metabolism; CTP biosynthesis via de novo pathway; CTP from UDP: step 2/2. Its activity is regulated as follows. Allosterically activated by GTP, when glutamine is the substrate; GTP has no effect on the reaction when ammonia is the substrate. The allosteric effector GTP functions by stabilizing the protein conformation that binds the tetrahedral intermediate(s) formed during glutamine hydrolysis. Inhibited by the product CTP, via allosteric rather than competitive inhibition. Its function is as follows. Catalyzes the ATP-dependent amination of UTP to CTP with either L-glutamine or ammonia as the source of nitrogen. Regulates intracellular CTP levels through interactions with the four ribonucleotide triphosphates. This is CTP synthase from Syntrophotalea carbinolica (strain DSM 2380 / NBRC 103641 / GraBd1) (Pelobacter carbinolicus).